A 350-amino-acid chain; its full sequence is Ketol-acid reductoisomerase (NADP(+)) (350 aa).

The KARI N-terminal Rossmann domain maps to 3-183 (AQIWYEDDGD…GALRAGAIKT (181 aa)). Residues 26-29 (YGSQ), arginine 49, serine 52, serine 54, and 84-87 (DQYQ) contribute to the NADP(+) site. Histidine 109 is a catalytic residue. Glycine 135 is an NADP(+) binding site. The 144-residue stretch at 184–327 (TFKEETETDL…PKLRAMFSWN (144 aa)) folds into the KARI C-terminal knotted domain. 4 residues coordinate Mg(2+): aspartate 192, glutamate 196, glutamate 228, and glutamate 232. A substrate-binding site is contributed by serine 253.

The protein belongs to the ketol-acid reductoisomerase family. The cofactor is Mg(2+).

The catalysed reaction is (2R)-2,3-dihydroxy-3-methylbutanoate + NADP(+) = (2S)-2-acetolactate + NADPH + H(+). It carries out the reaction (2R,3R)-2,3-dihydroxy-3-methylpentanoate + NADP(+) = (S)-2-ethyl-2-hydroxy-3-oxobutanoate + NADPH + H(+). The protein operates within amino-acid biosynthesis; L-isoleucine biosynthesis; L-isoleucine from 2-oxobutanoate: step 2/4. Its pathway is amino-acid biosynthesis; L-valine biosynthesis; L-valine from pyruvate: step 2/4. In terms of biological role, involved in the biosynthesis of branched-chain amino acids (BCAA). Catalyzes an alkyl-migration followed by a ketol-acid reduction of (S)-2-acetolactate (S2AL) to yield (R)-2,3-dihydroxy-isovalerate. In the isomerase reaction, S2AL is rearranged via a Mg-dependent methyl migration to produce 3-hydroxy-3-methyl-2-ketobutyrate (HMKB). In the reductase reaction, this 2-ketoacid undergoes a metal-dependent reduction by NADPH to yield (R)-2,3-dihydroxy-isovalerate. The protein is Ketol-acid reductoisomerase (NADP(+)) of Bifidobacterium animalis subsp. lactis (strain AD011).